The sequence spans 505 residues: ATP synthase subunit alpha (505 aa).

170–177 (GDRQTGKS) contributes to the ATP binding site.

This sequence belongs to the ATPase alpha/beta chains family. As to quaternary structure, F-type ATPases have 2 components, CF(1) - the catalytic core - and CF(0) - the membrane proton channel. CF(1) has five subunits: alpha(3), beta(3), gamma(1), delta(1), epsilon(1). CF(0) has four main subunits: a(1), b(1), b'(1) and c(9-12).

The protein localises to the cellular thylakoid membrane. It catalyses the reaction ATP + H2O + 4 H(+)(in) = ADP + phosphate + 5 H(+)(out). Produces ATP from ADP in the presence of a proton gradient across the membrane. The alpha chain is a regulatory subunit. This chain is ATP synthase subunit alpha, found in Prochlorococcus marinus (strain MIT 9215).